We begin with the raw amino-acid sequence, 685 residues long: Small ribosomal subunit protein mS39 (685 aa).

A mitochondrion-targeting transit peptide spans 1-10 (MAAAAVAARR). The residue at position 127 (Lys127) is an N6-acetyllysine. 10 PPR repeats span residues 150–184 (IEDV…GTTV), 185–220 (SLET…ENLE), 254–288 (NARS…RLSA), 289–329 (DVYT…KVKP), 330–366 (NLQT…GIEP), 367–407 (SLAT…TFSP), 412–446 (DGRF…DNRK), 454–488 (RKVY…VFLP), 489–523 (HYQI…SHTF), and 572–606 (PANP…KKIP). Residues 663–685 (LGNLTELNSSDGESSSDSDSDDK) are disordered. Residues 676-685 (SSSDSDSDDK) show a composition bias toward acidic residues.

Belongs to the mitochondrion-specific ribosomal protein mS39 family. Component of the mitochondrial ribosome small subunit (28S) which comprises a 12S rRNA and about 30 distinct proteins. Associated with the 12S mitochondrial rRNA (12S mt-rRNA).

The protein localises to the mitochondrion. Its function is as follows. Mitochondrial RNA-binding protein that has a role in mitochondrial translation. In Mus musculus (Mouse), this protein is Small ribosomal subunit protein mS39 (Ptcd3).